Reading from the N-terminus, the 572-residue chain is Urocanate hydratase (572 aa).

NAD(+) contacts are provided by residues 48 to 49 (GG), Gln-126, 172 to 174 (GMG), Asp-192, 238 to 239 (NA), 259 to 263 (QTSAH), 268 to 269 (YL), and Tyr-317. The active site involves Cys-405. Gly-487 serves as a coordination point for NAD(+). Residues 550–559 (EGDEAHEGDA) show a composition bias toward basic and acidic residues. The disordered stretch occupies residues 550–572 (EGDEAHEGDAAHGSGAAREGDGV).

It belongs to the urocanase family. NAD(+) serves as cofactor.

The protein resides in the cytoplasm. It catalyses the reaction 4-imidazolone-5-propanoate = trans-urocanate + H2O. It participates in amino-acid degradation; L-histidine degradation into L-glutamate; N-formimidoyl-L-glutamate from L-histidine: step 2/3. Its function is as follows. Catalyzes the conversion of urocanate to 4-imidazolone-5-propionate. This chain is Urocanate hydratase, found in Streptomyces coelicolor (strain ATCC BAA-471 / A3(2) / M145).